The primary structure comprises 287 residues: Isopentenyl-diphosphate Delta-isomerase 1, chloroplastic (287 aa).

The N-terminal 51 residues, 1–51 (MTLLLNTTAKLYIAPRTLPFTSSSTFARSPFLRIPSLLKPLSPLTARVSLS), are a transit peptide targeting the chloroplast. Lys-90 contacts substrate. Residues His-94 and His-106 each coordinate Mg(2+). The region spanning 104–256 (LLHRAFSVFL…GLKLSPWFRL (153 aa)) is the Nudix hydrolase domain. Residues Arg-125 and Lys-129 each contribute to the substrate site. Residue Cys-141 is part of the active site. Ser-142 contributes to the substrate binding site. The Nudix box signature appears at 142–172 (SHPLYRESELIDEESLGARNAAQRKLLDELG). Residues Glu-201 and Glu-203 each coordinate Mg(2+). Residue Glu-203 is part of the active site.

Belongs to the IPP isomerase type 1 family. As to quaternary structure, monomer. The cofactor is Mg(2+). In terms of tissue distribution, mainly expressed in roots and trichomes and, to a lower extent, in leaves, flowers and stems.

Its subcellular location is the plastid. It is found in the chloroplast. The catalysed reaction is isopentenyl diphosphate = dimethylallyl diphosphate. It participates in isoprenoid biosynthesis; dimethylallyl diphosphate biosynthesis; dimethylallyl diphosphate from isopentenyl diphosphate: step 1/1. Its pathway is porphyrin-containing compound metabolism; chlorophyll biosynthesis. Functionally, catalyzes the 1,3-allylic rearrangement of the homoallylic substrate isopentenyl (IPP) to its highly electrophilic allylic isomer, dimethylallyl diphosphate (DMAPP). In Cannabis sativa (Hemp), this protein is Isopentenyl-diphosphate Delta-isomerase 1, chloroplastic.